The following is a 1163-amino-acid chain: Leptin receptor (1163 aa).

The first 21 residues, 1 to 21 (MICQKFCVVLLHWEFICVITA), serve as a signal peptide directing secretion. At 22–837 (FNLSYPITPW…QDNTEKHQND (816 aa)) the chain is on the extracellular side. 7 N-linked (GlcNAc...) asparagine glycosylation sites follow: Asn23, Asn41, Asn56, Asn71, Asn79, Asn96, and Asn114. 2 disulfide bridges follow: Cys37–Cys88 and Cys87–Cys97. Cystine bridges form between Cys129–Cys140 and Cys184–Cys194. N-linked (GlcNAc...) asparagine glycosylation is found at Asn185, Asn204, Asn274, Asn345, and Asn395. Positions 237–331 (PPLGLRMEIT…TPHVFTTQDV (95 aa)) constitute a Fibronectin type-III 1 domain. 2 disulfide bridges follow: Cys350-Cys410 and Cys411-Cys416. Residue Asn431 is glycosylated (N-linked (GlcNAc...) asparagine). 3 disulfides stabilise this stretch: Cys434–Cys445, Cys471–Cys526, and Cys486–Cys496. The segment at 465-482 (RRSSLYCFDIPSIHPISK) is leptin-binding. 3 Fibronectin type-III domains span residues 537–632 (PPSS…TVVM), 637–730 (PMRG…LTFS), and 738–831 (IVQS…QDNT). Residues 620-624 (WSNWS) carry the WSXWS motif motif. N-linked (GlcNAc...) asparagine glycosylation is found at Asn622, Asn657, Asn668, Asn686, Asn695, Asn726, and Asn748. A helical transmembrane segment spans residues 838–860 (AGLYVIVPVIISSSILLLGTLLI). The Cytoplasmic segment spans residues 861 to 1163 (LHQRMKKLFW…MENKMCDLTV (303 aa)). A Box 1 motif motif is present at residues 869–877 (FWEDVPNPK). At Ser880 the chain carries Phosphoserine. Residues 891-896 (ETFEHL) are required for JAK2 activation. The tract at residues 896–904 (LFIKHTASV) is required for STAT3 phosphorylation. A Phosphotyrosine; by JAK2 modification is found at Tyr984. Tyr1077 carries the phosphotyrosine modification. A Phosphotyrosine; by JAK2 modification is found at Tyr1139.

The protein belongs to the type I cytokine receptor family. Type 2 subfamily. As to quaternary structure, present as a mixture of monomers and dimers. The phosphorylated receptor binds a number of SH2 domain-containing proteins such as JAK2, STAT3, PTPN11, and SOCS3. Interaction with SOCS3 inhibits JAK/STAT signaling and MAPK cascade. In terms of processing, on ligand binding, phosphorylated on two conserved C-terminal tyrosine residues (isoform B only) by JAK2. Tyr-984 is required for complete binding and activation of PTPN11, ERK/FOS activation and, for interaction with SOCS3. Phosphorylation on Tyr-1139 is required for STAT3 binding/activation. Post-translationally, on ligand binding, phosphorylated on two conserved C-terminal tyrosine residues (isoform B only) by JAK2. Tyr-984 is required for complete binding and activation of PTPN11, ERK/FOS activation,for interaction with SOCS3 and SOCS3 mediated inhibition of leptin signaling. Phosphorylation on Tyr-1139 is required for STAT3 binding/activation. Phosphorylation of Tyr-1077 has a more accessory role. Widely expressed. High expression of isoform B in liver, adipose tissue, hypothalamus and choroid plexus.

It localises to the cell membrane. It is found in the basolateral cell membrane. Receptor for hormone LEP/leptin. On ligand binding, mediates LEP central and peripheral effects through the activation of different signaling pathways such as JAK2/STAT3 and MAPK cascade/FOS. In the hypothalamus, LEP acts as an appetite-regulating factor that induces a decrease in food intake and an increase in energy consumption by inducing anorexinogenic factors and suppressing orexigenic neuropeptides, also regulates bone mass and secretion of hypothalamo-pituitary-adrenal hormones. In the periphery, increases basal metabolism, influences reproductive function, regulates pancreatic beta-cell function and insulin secretion, is pro-angiogenic and affects innate and adaptive immunity. Control of energy homeostasis and melanocortin production (stimulation of POMC and full repression of AgRP transcription) is mediated by STAT3 signaling, whereas distinct signals regulate NPY and the control of fertility, growth and glucose homeostasis. Involved in the regulation of counter-regulatory response to hypoglycemia by inhibiting neurons of the parabrachial nucleus. Has a specific effect on T lymphocyte responses, differentially regulating the proliferation of naive and memory T-cells. Leptin increases Th1 and suppresses Th2 cytokine production. Functionally, may transport LEP across the blood-brain barrier. Binds LEP and mediates LEP endocytosis. Does not induce phosphorylation of and activate STAT3. The sequence is that of Leptin receptor (LEPR) from Macaca mulatta (Rhesus macaque).